The following is a 189-amino-acid chain: Casparian strip membrane protein 1 (189 aa).

The Cytoplasmic segment spans residues 1–25; that stretch reads MMQAESGSAEAKGPLPPPVGRKRRG. The helical transmembrane segment at 26 to 46 threads the bilayer; sequence LGILDFLLRLLAIGATLSAAI. The Extracellular portion of the chain corresponds to 47 to 73; sequence TMGTTNETLQFFTQFFQFKARFYDLSA. A glycan (N-linked (GlcNAc...) asparagine) is linked at Asn-52. A helical membrane pass occupies residues 74–94; the sequence is FIYFVIANAIVGGYLLLSLPI. Residues 95-108 lie on the Cytoplasmic side of the membrane; that stretch reads SILNIVRPRAASSR. Residues 109 to 129 form a helical membrane-spanning segment; sequence VFLIFFDTVMVAVCTSGAAAA. The Extracellular segment spans residues 130–158; the sequence is VAILYVARKGNSRTNWFAICQRFNSFCNQ. The chain crosses the membrane as a helical span at residues 159 to 179; sequence AIGAVSASFAGVVFLILLVLL. Topologically, residues 180-189 are cytoplasmic; it reads SASTLYRRRP.

Belongs to the Casparian strip membrane proteins (CASP) family. Homodimer and heterodimers.

It localises to the cell membrane. In terms of biological role, regulates membrane-cell wall junctions and localized cell wall deposition. Required for establishment of the Casparian strip membrane domain (CSD) and the subsequent formation of Casparian strips, a cell wall modification of the root endodermis that determines an apoplastic barrier between the intraorganismal apoplasm and the extraorganismal apoplasm and prevents lateral diffusion. The sequence is that of Casparian strip membrane protein 1 from Picea glauca (White spruce).